Reading from the N-terminus, the 250-residue chain is Sulfate transporter CysZ (250 aa).

4 helical membrane-spanning segments follow: residues 26–46, 71–91, 150–170, and 211–231; these read LFVL…IYLA, ILWP…FTML, LFIL…WLLF, and IVYL…AAVA.

Belongs to the CysZ family.

The protein localises to the cell inner membrane. Its function is as follows. High affinity, high specificity proton-dependent sulfate transporter, which mediates sulfate uptake. Provides the sulfur source for the cysteine synthesis pathway. This chain is Sulfate transporter CysZ, found in Pseudomonas fluorescens (strain Pf0-1).